Here is a 348-residue protein sequence, read N- to C-terminus: D-fructose 1,6-bisphosphatase class 2/sedoheptulose 1,7-bisphosphatase 2 (348 aa).

Residues Asp-33, Glu-57, Asp-97, and Glu-100 each coordinate Mn(2+). Substrate contacts are provided by residues 100–102 (EGT), Tyr-131, 176–178 (RER), and 198–200 (DGD). Glu-225 contributes to the Mn(2+) binding site.

Belongs to the FBPase class 2 family. As to quaternary structure, homotetramer.

It catalyses the reaction beta-D-fructose 1,6-bisphosphate + H2O = beta-D-fructose 6-phosphate + phosphate. The enzyme catalyses D-sedoheptulose 1,7-bisphosphate + H2O = D-sedoheptulose 7-phosphate + phosphate. Its pathway is carbohydrate biosynthesis; Calvin cycle. Catalyzes the hydrolysis of fructose 1,6-bisphosphate (Fru 1,6-P2) and sedoheptulose 1,7-bisphosphate (Sed 1,7-P2) to fructose 6-phosphate and sedoheptulose 7-phosphate, respectively. In Acaryochloris marina (strain MBIC 11017), this protein is D-fructose 1,6-bisphosphatase class 2/sedoheptulose 1,7-bisphosphatase 2.